Here is a 416-residue protein sequence, read N- to C-terminus: Keratin, type I cuticular Ha1 (416 aa).

Positions 1-56 (MPYNFCLPSLSCRTSCSSRPCVPPSCHSCTLPGACNIPANVSNCNWFCEGSFNGSE) are head. One can recognise an IF rod domain in the interval 56 to 367 (EKETMQFLND…SLLESEDCNL (312 aa)). The tract at residues 57–91 (KETMQFLNDRLASYLEKVRQLERDNAELENLIRER) is coil 1A. The interval 92–102 (SQQQEPLLCPS) is linker 1. Positions 103–203 (YQSYFKTIEE…HEQEVNTLRC (101 aa)) are coil 1B. The tract at residues 204 to 219 (QLGDRLNVEVDAAPTV) is linker 12. Residues 220 to 363 (DLNRVLNETR…NTYRSLLESE (144 aa)) form a coil 2 region. The tract at residues 364–416 (DCNLPSNPCATTNACSKPIGPCLSNPCTSCVPPAPCTPCAPRPRCGPCNSFVR) is tail.

It belongs to the intermediate filament family. In terms of tissue distribution, present in scalp but not in hairless skin. Abundantly expressed in the differentiating cortex of growing (anagen) hair. Expression is restricted to the keratinocytes of the hair cortex and is absent from inner root sheath and medulla.

In Homo sapiens (Human), this protein is Keratin, type I cuticular Ha1 (KRT31).